A 340-amino-acid chain; its full sequence is Thylakoidal processing peptidase 1, chloroplastic (340 aa).

The N-terminal 52 residues, 1–52 (MAIRITFTYSTHVARNLVGTRVGPGGYCFESLVRPRFFSHKRDFDRSPRNRP), are a transit peptide targeting the chloroplast. A helical membrane pass occupies residues 155–175 (EDAKAAFTAVTVSILFRSALA). Over 176 to 340 (EPKSIPSTSM…AITRGPVAVS (165 aa)) the chain is Lumenal, thylakoid. S184 is an active-site residue.

The protein belongs to the peptidase S26 family.

The protein resides in the plastid. Its subcellular location is the chloroplast thylakoid membrane. The enzyme catalyses Cleavage of hydrophobic, N-terminal signal or leader sequences from secreted and periplasmic proteins.. Functionally, cleaves the thylakoid-transfer domain from a chloroplast protein. In Arabidopsis thaliana (Mouse-ear cress), this protein is Thylakoidal processing peptidase 1, chloroplastic (TPP1).